The chain runs to 578 residues: CTP synthase (578 aa).

One can recognise a Glutamine amidotransferase type-1 domain in the interval 305–559; sequence KIALVGKYTN…LGLVAASSGI (255 aa). Residues C404, H535, and E537 each act as for GATase activity in the active site.

Belongs to the CTP synthase family.

The catalysed reaction is UTP + L-glutamine + ATP + H2O = CTP + L-glutamate + ADP + phosphate + 2 H(+). Its pathway is pyrimidine metabolism; CTP biosynthesis via de novo pathway; CTP from UDP: step 2/2. In terms of biological role, catalyzes the ATP-dependent amination of UTP to CTP with either L-glutamine or ammonia as the source of nitrogen. In Candida glabrata (strain ATCC 2001 / BCRC 20586 / JCM 3761 / NBRC 0622 / NRRL Y-65 / CBS 138) (Yeast), this protein is CTP synthase (URA7).